Reading from the N-terminus, the 151-residue chain is Protein ripply1 (151 aa).

The WRPW motif signature appears at W57–W60. The interval H96–Y131 is ripply homology domain. Residues L130–K151 form a disordered region. The segment covering E132–K151 has biased composition (acidic residues).

It belongs to the ripply family.

The protein localises to the nucleus. Plays a role in somitogenesis. Essential for transcriptional repression of the segmental patterning genes, thus terminating the segmentation program in the presomitic mesoderm, and also required for the maintenance of rostrocaudal polarity in somites. The sequence is that of Protein ripply1 from Homo sapiens (Human).